A 543-amino-acid chain; its full sequence is CTP synthase (543 aa).

The amidoligase domain stretch occupies residues 1-265; sequence MTRFIFVTGG…DQIVLDKFGL (265 aa). Ser13 contacts CTP. UTP is bound at residue Ser13. ATP is bound by residues 14–19 and Asp71; that span reads SLGKGI. Asp71 and Glu139 together coordinate Mg(2+). CTP contacts are provided by residues 146–148, 186–191, and Lys222; these read DIE and KTKPTQ. UTP contacts are provided by residues 186-191 and Lys222; that span reads KTKPTQ. The 252-residue stretch at 290 to 541 folds into the Glutamine amidotransferase type-1 domain; that stretch reads TIAMVGKYMD…IQAAVEQNER (252 aa). Position 351 (Gly351) interacts with L-glutamine. The active-site Nucleophile; for glutamine hydrolysis is the Cys378. Residues 379 to 382, Glu402, and Arg469 contribute to the L-glutamine site; that span reads LGMQ. Catalysis depends on residues His514 and Glu516.

The protein belongs to the CTP synthase family. Homotetramer.

It carries out the reaction UTP + L-glutamine + ATP + H2O = CTP + L-glutamate + ADP + phosphate + 2 H(+). The catalysed reaction is L-glutamine + H2O = L-glutamate + NH4(+). The enzyme catalyses UTP + NH4(+) + ATP = CTP + ADP + phosphate + 2 H(+). It functions in the pathway pyrimidine metabolism; CTP biosynthesis via de novo pathway; CTP from UDP: step 2/2. Its activity is regulated as follows. Allosterically activated by GTP, when glutamine is the substrate; GTP has no effect on the reaction when ammonia is the substrate. The allosteric effector GTP functions by stabilizing the protein conformation that binds the tetrahedral intermediate(s) formed during glutamine hydrolysis. Inhibited by the product CTP, via allosteric rather than competitive inhibition. Functionally, catalyzes the ATP-dependent amination of UTP to CTP with either L-glutamine or ammonia as the source of nitrogen. Regulates intracellular CTP levels through interactions with the four ribonucleotide triphosphates. The protein is CTP synthase of Saccharophagus degradans (strain 2-40 / ATCC 43961 / DSM 17024).